The sequence spans 721 residues: Angiomotin-like 2a (721 aa).

Residues 35–84 (QQALRGGSSGGGAGSPRSSLESLTQEESLSPQLSARQEPQGQEHQGDFQH) form a disordered region. Over residues 49-68 (SPRSSLESLTQEESLSPQLS) the composition is skewed to low complexity. Y103 is subject to Phosphotyrosine; by FGFR1. Residues 169–214 (DNIPMSSSHSYPQLSNNHSDTVVNEQSVHQPDQRGPPPEYPFMVRS) are disordered. A compositionally biased stretch (polar residues) spans 172-198 (PMSSSHSYPQLSNNHSDTVVNEQSVHQ). A coiled-coil region spans residues 275–531 (ANNFQMEQLI…TRWEQKYLEE (257 aa)). Residues 554–567 (INHSPRNSPNSSFN) show a composition bias toward polar residues. Disordered regions lie at residues 554-575 (INHSPRNSPNSSFNEDLPSPNH) and 666-709 (DSST…TQIS). A compositionally biased stretch (low complexity) spans 688–702 (SAPEPSTASSSESTS). The PDZ-binding signature appears at 718–721 (EILI).

The protein belongs to the angiomotin family. As to quaternary structure, interacts with SRC. In terms of processing, phosphorylation at Tyr-103 is necessary for efficient binding to SRC and synergistically functioning with SRC to activate the downstream MAPK pathway. Expressed in endothelial cells.

The protein resides in the recycling endosome. It localises to the cytoplasm. It is found in the cell projection. Its subcellular location is the podosome. The protein localises to the cell junction. Required for proper architecture of actin filaments and for cell movements during embryogenesis. Plays a role in the radial actin fiber architecture in skin epithelial cells, thereby maintains cell geometry, size and cell interconnectivity within the skin. Plays an important role in coupling actin fibers to cell junctions in endothelial cells and is therefore required for correct endothelial cell morphology and maintenance of dorsal aorta lumen expansion during embryogenesis. May further play a role in the polarity, proliferation and migration of endothelial cells, and therefore participates in angiogenesis. Inhibits the Wnt/beta-catenin signaling pathway, probably by recruiting CTNNB1 to recycling endosomes and hence preventing its translocation to the nucleus. Regulates the translocation of phosphorylated SRC to peripheral cell-matrix adhesion sites. Selectively promotes FGF-induced MAPK activation through SRC. The sequence is that of Angiomotin-like 2a (amotl2a) from Danio rerio (Zebrafish).